The primary structure comprises 500 residues: Zinc finger protein ENHYDROUS (500 aa).

Residues 1–42 (MPVDLDNSSTVSGDASVSSTGNQNLTPKSVGKKKRNLPGMPD) form a disordered region. Over residues 8–21 (SSTVSGDASVSSTG) the composition is skewed to low complexity. A Phosphoserine modification is found at serine 51. C2H2-type zinc fingers lie at residues 61–83 (FVCE…RRGH) and 102–132 (YVCP…CRKH). The Nuclear localization signal motif lies at 124 to 131 (IKKHFCRK). Residues 137–160 (WKCEKCSKKYAVQSDWKAHSKICG) form a C2H2-type 2; degenerate zinc finger. Zn(2+) is bound by residues cysteine 139, cysteine 142, histidine 155, cysteine 159, cysteine 166, cysteine 168, histidine 181, and cysteine 185. Residues 164–187 (YKCDCGTLFSRRDSFITHRAFCDA) form a CCHC-type 2; atypical zinc finger. Positions 174-186 (RRDSFITHRAFCD) are SHR-binding. Positions 196–236 (HTQSKKLYPETVTRKNPEIEQKSPAAVESSPSLPPSSPPSV) are disordered. The segment covering 207–216 (VTRKNPEIEQ) has biased composition (basic and acidic residues).

As to quaternary structure, interacts with the DELLA proteins (e.g. GAI/RGA2, RGA, RGL1, RGL2 and RGLG3), acting as coactivators. As to expression, at 3 days post anthesis (DPA), expressed in the chalazal endosperm region. By 6 DPA, expressed in the endosperm and embryo. In fully germinated seed, strongest expression in the root tip and not detected in the cotyledons. In 4-days old seedlings, restricted to the vasculature of the cotyledons, the shoot apical meristem region, and the root tip. By 8 days, restricted to newly emerged leaves.

Its subcellular location is the nucleus. Its function is as follows. Transcription factor promoting the transition to germination by regulating light and hormonal signaling during seed maturation. Acts as a positive regulator of phytochrome and/or gibberellin action. The chain is Zinc finger protein ENHYDROUS from Arabidopsis thaliana (Mouse-ear cress).